Reading from the N-terminus, the 248-residue chain is Triosephosphate isomerase (248 aa).

Substrate is bound at residue 9–11 (NWK). His-94 functions as the Electrophile in the catalytic mechanism. Glu-166 acts as the Proton acceptor in catalysis. Residues Gly-172, Ser-212, and 233 to 234 (GG) contribute to the substrate site.

This sequence belongs to the triosephosphate isomerase family. As to quaternary structure, homodimer.

The protein resides in the cytoplasm. It carries out the reaction D-glyceraldehyde 3-phosphate = dihydroxyacetone phosphate. It participates in carbohydrate biosynthesis; gluconeogenesis. The protein operates within carbohydrate degradation; glycolysis; D-glyceraldehyde 3-phosphate from glycerone phosphate: step 1/1. Functionally, involved in the gluconeogenesis. Catalyzes stereospecifically the conversion of dihydroxyacetone phosphate (DHAP) to D-glyceraldehyde-3-phosphate (G3P). The sequence is that of Triosephosphate isomerase from Clostridium acetobutylicum (strain ATCC 824 / DSM 792 / JCM 1419 / IAM 19013 / LMG 5710 / NBRC 13948 / NRRL B-527 / VKM B-1787 / 2291 / W).